Consider the following 214-residue polypeptide: ATP-dependent Clp protease proteolytic subunit (214 aa).

The Nucleophile role is filled by serine 110. Histidine 135 is an active-site residue.

It belongs to the peptidase S14 family. As to quaternary structure, fourteen ClpP subunits assemble into 2 heptameric rings which stack back to back to give a disk-like structure with a central cavity, resembling the structure of eukaryotic proteasomes.

It localises to the cytoplasm. The enzyme catalyses Hydrolysis of proteins to small peptides in the presence of ATP and magnesium. alpha-casein is the usual test substrate. In the absence of ATP, only oligopeptides shorter than five residues are hydrolyzed (such as succinyl-Leu-Tyr-|-NHMec, and Leu-Tyr-Leu-|-Tyr-Trp, in which cleavage of the -Tyr-|-Leu- and -Tyr-|-Trp bonds also occurs).. Functionally, cleaves peptides in various proteins in a process that requires ATP hydrolysis. Has a chymotrypsin-like activity. Plays a major role in the degradation of misfolded proteins. This is ATP-dependent Clp protease proteolytic subunit from Legionella pneumophila (strain Paris).